A 271-amino-acid polypeptide reads, in one-letter code: Urease accessory protein UreD (271 aa).

It belongs to the UreD family. As to quaternary structure, ureD, UreF and UreG form a complex that acts as a GTP-hydrolysis-dependent molecular chaperone, activating the urease apoprotein by helping to assemble the nickel containing metallocenter of UreC. The UreE protein probably delivers the nickel.

It is found in the cytoplasm. Required for maturation of urease via the functional incorporation of the urease nickel metallocenter. The protein is Urease accessory protein UreD of Actinomyces naeslundii.